The primary structure comprises 176 residues: NAD(P)H-quinone oxidoreductase subunit I, chloroplastic (176 aa).

2 consecutive 4Fe-4S ferredoxin-type domains span residues 55–84 (GRIH…VDWE) and 95–124 (LNYS…MTEE). Residues Cys-64, Cys-67, Cys-70, Cys-74, Cys-104, Cys-107, Cys-110, and Cys-114 each contribute to the [4Fe-4S] cluster site.

The protein belongs to the complex I 23 kDa subunit family. In terms of assembly, NDH is composed of at least 16 different subunits, 5 of which are encoded in the nucleus. The cofactor is [4Fe-4S] cluster.

It is found in the plastid. The protein localises to the chloroplast thylakoid membrane. The catalysed reaction is a plastoquinone + NADH + (n+1) H(+)(in) = a plastoquinol + NAD(+) + n H(+)(out). It catalyses the reaction a plastoquinone + NADPH + (n+1) H(+)(in) = a plastoquinol + NADP(+) + n H(+)(out). In terms of biological role, NDH shuttles electrons from NAD(P)H:plastoquinone, via FMN and iron-sulfur (Fe-S) centers, to quinones in the photosynthetic chain and possibly in a chloroplast respiratory chain. The immediate electron acceptor for the enzyme in this species is believed to be plastoquinone. Couples the redox reaction to proton translocation, and thus conserves the redox energy in a proton gradient. This Populus trichocarpa (Western balsam poplar) protein is NAD(P)H-quinone oxidoreductase subunit I, chloroplastic.